The following is a 94-amino-acid chain: MFDIKEDQNGVVVKVRVQPRASKNSLAGEMEGALKVRLTAPPVDGAANEACCKFFGELFGVAKSKVEIIAGHTGRNKLVHIQGVTEKQARFILK.

It belongs to the UPF0235 family.

The chain is UPF0235 protein Dred_0717 from Desulforamulus reducens (strain ATCC BAA-1160 / DSM 100696 / MI-1) (Desulfotomaculum reducens).